Reading from the N-terminus, the 93-residue chain is Large ribosomal subunit protein eL31 (93 aa).

This sequence belongs to the eukaryotic ribosomal protein eL31 family.

The polypeptide is Large ribosomal subunit protein eL31 (Methanosarcina mazei (strain ATCC BAA-159 / DSM 3647 / Goe1 / Go1 / JCM 11833 / OCM 88) (Methanosarcina frisia)).